A 314-amino-acid polypeptide reads, in one-letter code: Homoserine O-acetyltransferase (314 aa).

Catalysis depends on Cys-142, which acts as the Acyl-thioester intermediate. Residues Lys-163 and Ser-192 each contribute to the substrate site. His-235 (proton acceptor) is an active-site residue. Residue Glu-237 is part of the active site. A substrate-binding site is contributed by Arg-249.

The protein belongs to the MetA family.

The protein resides in the cytoplasm. The enzyme catalyses L-homoserine + acetyl-CoA = O-acetyl-L-homoserine + CoA. Its pathway is amino-acid biosynthesis; L-methionine biosynthesis via de novo pathway; O-acetyl-L-homoserine from L-homoserine: step 1/1. Its function is as follows. Transfers an acetyl group from acetyl-CoA to L-homoserine, forming acetyl-L-homoserine. The protein is Homoserine O-acetyltransferase of Streptococcus thermophilus (strain ATCC BAA-491 / LMD-9).